Here is an 88-residue protein sequence, read N- to C-terminus: Small ribosomal subunit protein uS19 (88 aa).

It belongs to the universal ribosomal protein uS19 family.

Functionally, protein S19 forms a complex with S13 that binds strongly to the 16S ribosomal RNA. This is Small ribosomal subunit protein uS19 from Chlamydia felis (strain Fe/C-56) (Chlamydophila felis).